The following is a 229-amino-acid chain: Protein-L-isoaspartate O-methyltransferase (229 aa).

The active site involves Ser78.

Belongs to the methyltransferase superfamily. L-isoaspartyl/D-aspartyl protein methyltransferase family.

It is found in the cytoplasm. The catalysed reaction is [protein]-L-isoaspartate + S-adenosyl-L-methionine = [protein]-L-isoaspartate alpha-methyl ester + S-adenosyl-L-homocysteine. Its function is as follows. Catalyzes the methyl esterification of L-isoaspartyl residues in peptides and proteins that result from spontaneous decomposition of normal L-aspartyl and L-asparaginyl residues. It plays a role in the repair and/or degradation of damaged proteins. This is Protein-L-isoaspartate O-methyltransferase from Chromohalobacter salexigens (strain ATCC BAA-138 / DSM 3043 / CIP 106854 / NCIMB 13768 / 1H11).